The chain runs to 385 residues: Cytochrome b (385 aa).

Transmembrane regions (helical) follow at residues 32-52 (FGAL…FLAM), 76-98 (WLIR…IHVF), 113-133 (LWNL…LGYV), and 179-199 (FFSL…IHVA). Positions 82 and 96 each coordinate heme b. Heme b contacts are provided by histidine 183 and histidine 197. Histidine 202 provides a ligand contact to a ubiquinone. 4 helical membrane-spanning segments follow: residues 226–246 (FIFK…YAVF), 290–310 (LGGV…PFIT), 322–342 (SKTI…WIGF), and 349–369 (YLML…SLAV).

This sequence belongs to the cytochrome b family. As to quaternary structure, the main subunits of complex b-c1 are: cytochrome b, cytochrome c1 and the Rieske protein. It depends on heme b as a cofactor.

Its subcellular location is the mitochondrion inner membrane. In terms of biological role, component of the ubiquinol-cytochrome c reductase complex (complex III or cytochrome b-c1 complex) that is part of the mitochondrial respiratory chain. The b-c1 complex mediates electron transfer from ubiquinol to cytochrome c. Contributes to the generation of a proton gradient across the mitochondrial membrane that is then used for ATP synthesis. The protein is Cytochrome b (MT-CYB) of Acanthamoeba castellanii (Amoeba).